The primary structure comprises 398 residues: 4-hydroxy-3-methylbut-2-enyl diphosphate reductase (398 aa).

Cys-66 serves as a coordination point for [4Fe-4S] cluster. A (2E)-4-hydroxy-3-methylbut-2-enyl diphosphate-binding site is contributed by His-96. Residue His-96 coordinates dimethylallyl diphosphate. His-96 provides a ligand contact to isopentenyl diphosphate. A [4Fe-4S] cluster-binding site is contributed by Cys-157. Residue His-185 coordinates (2E)-4-hydroxy-3-methylbut-2-enyl diphosphate. His-185 serves as a coordination point for dimethylallyl diphosphate. Residue His-185 coordinates isopentenyl diphosphate. The active-site Proton donor is Glu-187. Thr-250 is a binding site for (2E)-4-hydroxy-3-methylbut-2-enyl diphosphate. Cys-288 is a [4Fe-4S] cluster binding site. 4 residues coordinate (2E)-4-hydroxy-3-methylbut-2-enyl diphosphate: Ser-317, Ser-318, Asn-319, and Ser-380. Dimethylallyl diphosphate is bound by residues Ser-317, Ser-318, Asn-319, and Ser-380. 4 residues coordinate isopentenyl diphosphate: Ser-317, Ser-318, Asn-319, and Ser-380.

This sequence belongs to the IspH family. Requires [4Fe-4S] cluster as cofactor.

The catalysed reaction is isopentenyl diphosphate + 2 oxidized [2Fe-2S]-[ferredoxin] + H2O = (2E)-4-hydroxy-3-methylbut-2-enyl diphosphate + 2 reduced [2Fe-2S]-[ferredoxin] + 2 H(+). The enzyme catalyses dimethylallyl diphosphate + 2 oxidized [2Fe-2S]-[ferredoxin] + H2O = (2E)-4-hydroxy-3-methylbut-2-enyl diphosphate + 2 reduced [2Fe-2S]-[ferredoxin] + 2 H(+). The protein operates within isoprenoid biosynthesis; dimethylallyl diphosphate biosynthesis; dimethylallyl diphosphate from (2E)-4-hydroxy-3-methylbutenyl diphosphate: step 1/1. It functions in the pathway isoprenoid biosynthesis; isopentenyl diphosphate biosynthesis via DXP pathway; isopentenyl diphosphate from 1-deoxy-D-xylulose 5-phosphate: step 6/6. Catalyzes the conversion of 1-hydroxy-2-methyl-2-(E)-butenyl 4-diphosphate (HMBPP) into a mixture of isopentenyl diphosphate (IPP) and dimethylallyl diphosphate (DMAPP). Acts in the terminal step of the DOXP/MEP pathway for isoprenoid precursor biosynthesis. In Prochlorococcus marinus (strain MIT 9515), this protein is 4-hydroxy-3-methylbut-2-enyl diphosphate reductase.